We begin with the raw amino-acid sequence, 440 residues long: Zinc finger MYND domain-containing protein 10 (440 aa).

Residues 366 to 440 (QDLRLQARRW…VLAAQGDRAK (75 aa)) form an interaction with DNAAF11 region. Cys-394, Cys-397, Cys-405, Cys-408, Cys-414, Cys-418, His-426, and Cys-430 together coordinate Zn(2+). The MYND-type zinc finger occupies 394–430 (CAYCSAEASKRCSRCQNEWYCCRECQVKHWEKHGKTC).

The protein belongs to the ZMYND10 family. In terms of assembly, interacts (via C-terminus) with DNAAF11 (via CS domain); this interaction stabilizes DNAAF11 at the protein level. Interacts (via C-terminus) with DNAL1; this interaction stabilizes DNAL1 at the protein level. Interacts with DNAAF4, HSPA8, IQUB, RUVBL2 and DYNTL5.

The protein localises to the cytoplasm. It localises to the cytoskeleton. Its subcellular location is the microtubule organizing center. It is found in the centrosome. The protein resides in the centriolar satellite. The protein localises to the apical cell membrane. It localises to the dynein axonemal particle. Functionally, plays a role in axonemal structure organization and motility. Involved in axonemal pre-assembly of inner and outer dynein arms (IDA and ODA, respectively) for proper axoneme building for cilia motility. May act by indirectly regulating transcription of dynein proteins. This chain is Zinc finger MYND domain-containing protein 10, found in Homo sapiens (Human).